The following is a 134-amino-acid chain: Protein NrdI (134 aa).

It belongs to the NrdI family.

Probably involved in ribonucleotide reductase function. The protein is Protein NrdI of Yersinia pseudotuberculosis serotype O:1b (strain IP 31758).